The primary structure comprises 226 residues: Killer cell lectin-like receptor subfamily E member 1 (226 aa).

The interval Met1–Thr28 is disordered. Topologically, residues Met1–Arg68 are cytoplasmic. The segment covering Thr7–Lys18 has biased composition (polar residues). The helical; Signal-anchor for type II membrane protein transmembrane segment at Leu69–Thr89 threads the bilayer. Residues Thr90–Lys226 are Extracellular-facing. Disulfide bonds link Cys113-Cys124, Cys141-Cys224, and Cys202-Cys216. The 106-residue stretch at Phe120–Lys225 folds into the C-type lectin domain. Residue Asn145 is glycosylated (N-linked (GlcNAc...) asparagine).

As to quaternary structure, heterodimer; with KLRI1 or KLRI2. As to expression, expressed in natural killer (NK) cells (at protein level). Also detected in natural killer T (NKT) cells (at protein level). Has little or no expression in T cells (at protein level).

It localises to the cell membrane. Lectin-like receptor for natural killer (NK) cells. Can either inhibit or activate NK cell cytotoxic activity, depending on its binding partner. Heterodimer formation with KLRI1 mediates NK cell inhibition whereas heterodimer formation with KLRI2 mediates NK cell activation. Plays a role in allogeneic recognition by the immune system. The protein is Killer cell lectin-like receptor subfamily E member 1 of Mus musculus (Mouse).